We begin with the raw amino-acid sequence, 827 residues long: Putative transcriptional regulatory protein C16G5.16 (827 aa).

The zn(2)-C6 fungal-type DNA-binding region spans 16–42 (CDECHRRKIKCDQRRPCSNCIAYNYEC). 3 disordered regions span residues 80–114 (LKLPSFLAPPNDKDSPVNQSPWKRSDSSKRSSSQD), 158–193 (TVPNPVQESNSSSSQPDPLSFPYLPPTPAEDEHKKP), and 794–827 (QPPSMTNQVAYPTVRDGSNNSPDHPSSSNSKRTE). Over residues 102–112 (KRSDSSKRSSS) the composition is skewed to basic and acidic residues. A Phosphoserine modification is found at serine 112. Low complexity-rich tracts occupy residues 159–179 (VPNPVQESNSSSSQPDPLSFP) and 811–827 (SNNSPDHPSSSNSKRTE).

It belongs to the ASG1 family.

The protein localises to the cytoplasm. It localises to the nucleus. In Schizosaccharomyces pombe (strain 972 / ATCC 24843) (Fission yeast), this protein is Putative transcriptional regulatory protein C16G5.16.